The sequence spans 417 residues: Neuropeptide FF receptor 2 (417 aa).

The Extracellular segment spans residues 1-45 (MSEKWDSNSSESWNHIWSGNDTQHHWYSDINITYVNYYLHQPQVA). Residues Asn-8, Asn-20, and Asn-31 are each glycosylated (N-linked (GlcNAc...) asparagine). A helical transmembrane segment spans residues 46-66 (AVFISSYLLIFVLCMVGNTVV). The Cytoplasmic segment spans residues 67-82 (CFIVIRNRHMHTVTNF). A helical transmembrane segment spans residues 83 to 103 (FILNLAISDLLVGIFCMPITL). Residues 104–119 (LDNIIAGWPFGSSMCK) are Extracellular-facing. A disulfide bridge connects residues Cys-118 and Cys-206. Residues 120-140 (ISGLVQGISVAASVFTLVAIA) form a helical membrane-spanning segment. Over 141–160 (VDRFRCVVYPFKPKLTVKTA) the chain is Cytoplasmic. Residues 161 to 181 (FVTIVIIWGLAIAIMTPSAIM) traverse the membrane as a helical segment. At 182–217 (LHVQEEKYYRVRLSSHNKTSTVYWCREDWPRHEMRR) the chain is on the extracellular side. A glycan (N-linked (GlcNAc...) asparagine) is linked at Asn-198. The helical transmembrane segment at 218-238 (IYTTVLFATIYLAPLSLIVIM) threads the bilayer. The Cytoplasmic portion of the chain corresponds to 239–274 (YARIGASLFKTAAHCTGKQRPVQWHVSKKKQKVIKM). The helical transmembrane segment at 275–295 (LLTVALLFILSWLPLWTLMML) threads the bilayer. Residues 296 to 310 (SDYTDLSPNKLRIIN) lie on the Extracellular side of the membrane. A helical transmembrane segment spans residues 311–331 (IYIYPFAHWLAFCNSSVNPII). At 332-417 (YGFFNENFRN…MGEATNSTVA (86 aa)) the chain is on the cytoplasmic side. Positions 382-401 (SQNPGGENLGCGKSADNPTQ) are disordered.

The protein belongs to the G-protein coupled receptor 1 family.

The protein localises to the cell membrane. Its function is as follows. Receptor for NPAF (A-18-F-amide) and NPFF (F-8-F-amide) neuropeptides, also known as morphine-modulating peptides. Can also be activated by a variety of naturally occurring or synthetic FMRF-amide like ligands. This receptor mediates its action by association with G proteins that activate a phosphatidylinositol-calcium second messenger system. In Mus musculus (Mouse), this protein is Neuropeptide FF receptor 2 (Npffr2).